The chain runs to 862 residues: Protein kintoun (862 aa).

Disordered regions lie at residues 208–229 (KLLPPLPNVPAPGKTGSERTTK), 564–602 (TKREEHGEPECDEKDGSEAEKARTLQKAKRNSRKKKKER), 626–670 (GEGA…STMP), and 743–854 (RREV…QFKS). The segment covering 564–586 (TKREEHGEPECDEKDGSEAEKAR) has biased composition (basic and acidic residues). Positions 587–601 (TLQKAKRNSRKKKKE) are enriched in basic residues. 2 stretches are compositionally biased toward basic and acidic residues: residues 748–757 (RRADARRMSE) and 766–785 (KDAHHHDDEHCSSSDQHDEK).

The protein belongs to the PIH1 family. Kintoun subfamily.

It localises to the cytoplasm. In terms of biological role, required for cytoplasmic pre-assembly of axonemal dyneins, thereby playing a central role in motility in cilia and flagella. Involved in pre-assembly of dynein arm complexes in the cytoplasm before intraflagellar transport loads them for the ciliary compartment. The protein is Protein kintoun of Anopheles gambiae (African malaria mosquito).